The sequence spans 360 residues: Aurora kinase B (360 aa).

One can recognise a Protein kinase domain in the interval Phe93–Val343. Residues Leu99 to Val107 and Lys122 each bind ATP. The active-site Proton acceptor is the Asp216.

It belongs to the protein kinase superfamily. Ser/Thr protein kinase family. Aurora subfamily. In terms of assembly, component of the chromosomal passenger complex (CPC).

The protein localises to the nucleus. The protein resides in the chromosome. It is found in the centromere. Its subcellular location is the cytoplasm. It localises to the cytoskeleton. The protein localises to the spindle. The protein resides in the midbody. It catalyses the reaction L-seryl-[protein] + ATP = O-phospho-L-seryl-[protein] + ADP + H(+). The catalysed reaction is L-threonyl-[protein] + ATP = O-phospho-L-threonyl-[protein] + ADP + H(+). Kinase activity is stimulated by cell-cycle specific phosphorylation. In terms of biological role, serine/threonine-protein kinase component of the chromosomal passenger complex (CPC), a complex that acts as a key regulator of mitosis. The CPC complex has essential functions at the centromere in ensuring correct chromosome alignment and segregation and is required for chromatin-induced microtubule stabilization and spindle assembly. Involved in the bipolar attachment of spindle microtubules to kinetochores and is a key regulator for the onset of cytokinesis during mitosis. Required for central/midzone spindle assembly and cleavage furrow formation. Key component of the cytokinesis checkpoint, a process required to delay abscission to prevent both premature resolution of intercellular chromosome bridges and accumulation of DNA damage. Phosphorylates 'Ser-10' of histone H3 during mitosis. This is Aurora kinase B from Xenopus tropicalis (Western clawed frog).